The chain runs to 1360 residues: DNA-directed RNA polymerase subunit beta (1360 aa).

This sequence belongs to the RNA polymerase beta chain family. The RNAP catalytic core consists of 2 alpha, 1 beta, 1 beta' and 1 omega subunit. When a sigma factor is associated with the core the holoenzyme is formed, which can initiate transcription.

It carries out the reaction RNA(n) + a ribonucleoside 5'-triphosphate = RNA(n+1) + diphosphate. Its function is as follows. DNA-dependent RNA polymerase catalyzes the transcription of DNA into RNA using the four ribonucleoside triphosphates as substrates. The protein is DNA-directed RNA polymerase subunit beta of Ruthia magnifica subsp. Calyptogena magnifica.